The chain runs to 137 residues: Basic phospholipase A2 homolog APL-K49 (137 aa).

The N-terminal stretch at M1–G16 is a signal peptide. 7 disulfides stabilise this stretch: C42–C131, C44–C60, C59–C111, C65–C137, C66–C104, C73–C97, and C91–C102. Residues K121 to K133 are important for membrane-damaging activities in eukaryotes and bacteria; heparin-binding.

This sequence belongs to the phospholipase A2 family. Group II subfamily. K49 sub-subfamily. Monomer. As to expression, expressed by the venom gland.

Its subcellular location is the secreted. Functionally, snake venom phospholipase A2 (PLA2) that lacks enzymatic activity. Does not show antibacterial activity. Is myotoxic and displays edema-inducing activities. A model of myotoxic mechanism has been proposed: an apo Lys49-PLA2 is activated by the entrance of a hydrophobic molecule (e.g. fatty acid) at the hydrophobic channel of the protein leading to a reorientation of a monomer. This reorientation causes a transition between 'inactive' to 'active' states, causing alignment of C-terminal and membrane-docking sites (MDoS) side-by-side and putting the membrane-disruption sites (MDiS) in the same plane, exposed to solvent and in a symmetric position for both monomers. The MDoS region stabilizes the toxin on membrane by the interaction of charged residues with phospholipid head groups. Subsequently, the MDiS region destabilizes the membrane with penetration of hydrophobic residues. This insertion causes a disorganization of the membrane, allowing an uncontrolled influx of ions (i.e. calcium and sodium), and eventually triggering irreversible intracellular alterations and cell death. The protein is Basic phospholipase A2 homolog APL-K49 of Agkistrodon piscivorus leucostoma (Western cottonmouth).